The sequence spans 173 residues: Large ribosomal subunit protein uL5 (173 aa).

It belongs to the universal ribosomal protein uL5 family. Component of the large ribosomal subunit.

The protein localises to the nucleus. The protein resides in the cytoplasm. In terms of biological role, component of the ribosome, a large ribonucleoprotein complex responsible for the synthesis of proteins in the cell. The small ribosomal subunit (SSU) binds messenger RNAs (mRNAs) and translates the encoded message by selecting cognate aminoacyl-transfer RNA (tRNA) molecules. The large subunit (LSU) contains the ribosomal catalytic site termed the peptidyl transferase center (PTC), which catalyzes the formation of peptide bonds, thereby polymerizing the amino acids delivered by tRNAs into a polypeptide chain. The nascent polypeptides leave the ribosome through a tunnel in the LSU and interact with protein factors that function in enzymatic processing, targeting, and the membrane insertion of nascent chains at the exit of the ribosomal tunnel. The polypeptide is Large ribosomal subunit protein uL5 (RPL11) (Encephalitozoon cuniculi (strain GB-M1) (Microsporidian parasite)).